Here is a 201-residue protein sequence, read N- to C-terminus: ATP-dependent Clp protease proteolytic subunit 1 (201 aa).

Ser-102 functions as the Nucleophile in the catalytic mechanism. The active site involves His-127.

It belongs to the peptidase S14 family. In terms of assembly, fourteen ClpP subunits assemble into 2 heptameric rings which stack back to back to give a disk-like structure with a central cavity, resembling the structure of eukaryotic proteasomes.

Its subcellular location is the cytoplasm. It carries out the reaction Hydrolysis of proteins to small peptides in the presence of ATP and magnesium. alpha-casein is the usual test substrate. In the absence of ATP, only oligopeptides shorter than five residues are hydrolyzed (such as succinyl-Leu-Tyr-|-NHMec, and Leu-Tyr-Leu-|-Tyr-Trp, in which cleavage of the -Tyr-|-Leu- and -Tyr-|-Trp bonds also occurs).. In terms of biological role, cleaves peptides in various proteins in a process that requires ATP hydrolysis. Has a chymotrypsin-like activity. Plays a major role in the degradation of misfolded proteins. The protein is ATP-dependent Clp protease proteolytic subunit 1 of Mesorhizobium japonicum (strain LMG 29417 / CECT 9101 / MAFF 303099) (Mesorhizobium loti (strain MAFF 303099)).